The following is a 204-amino-acid chain: MSKVVVLNDKLEKAGELDLPSKYAEVNPHNLYLYVKSYLASLRANTAHTKGRSDVSGGGKKPWRQKGRGGARAGSTRTNVWVGGAVAFGPTNERNYFQKVNKKQKRLAFERALADKAAKGALFTADSLAIESGKTKDANAVIKKLGVKDVLIVKDLLDEKTLLAYRNLANCYVVDVAEVNAYLVSVFNAVIMEKSALESITKEG.

Residues 49 to 75 (TKGRSDVSGGGKKPWRQKGRGGARAGS) are disordered.

It belongs to the universal ribosomal protein uL4 family. Part of the 50S ribosomal subunit.

Functionally, one of the primary rRNA binding proteins, this protein initially binds near the 5'-end of the 23S rRNA. It is important during the early stages of 50S assembly. It makes multiple contacts with different domains of the 23S rRNA in the assembled 50S subunit and ribosome. Its function is as follows. Forms part of the polypeptide exit tunnel. The chain is Large ribosomal subunit protein uL4 from Campylobacter jejuni subsp. doylei (strain ATCC BAA-1458 / RM4099 / 269.97).